A 602-amino-acid polypeptide reads, in one-letter code: UvrABC system protein C (602 aa).

One can recognise a GIY-YIG domain in the interval 17–94; that stretch reads TTSGCYKMYS…IKEYKPDYNI (78 aa). A UVR domain is found at 199 to 234; the sequence is SKLLDETEIKMKEAIKKEDFEAAIKLKETKRSLIEI.

The protein belongs to the UvrC family. In terms of assembly, interacts with UvrB in an incision complex.

Its subcellular location is the cytoplasm. In terms of biological role, the UvrABC repair system catalyzes the recognition and processing of DNA lesions. UvrC both incises the 5' and 3' sides of the lesion. The N-terminal half is responsible for the 3' incision and the C-terminal half is responsible for the 5' incision. This Borrelia hermsii (strain HS1 / DAH) protein is UvrABC system protein C.